Reading from the N-terminus, the 340-residue chain is 3-isopropylmalate dehydrogenase (340 aa).

Substrate contacts are provided by Arg88, Arg98, Arg122, and Asp212. Mg(2+)-binding residues include Asp212, Asp236, and Asp240. NAD(+) is bound at residue Gly272–Asp284.

This sequence belongs to the isocitrate and isopropylmalate dehydrogenases family. LeuB type 2 subfamily. In terms of assembly, homodimer. The cofactor is Mg(2+). Mn(2+) serves as cofactor.

The protein localises to the cytoplasm. The enzyme catalyses (2R,3S)-3-isopropylmalate + NAD(+) = 4-methyl-2-oxopentanoate + CO2 + NADH. It functions in the pathway amino-acid biosynthesis; L-leucine biosynthesis; L-leucine from 3-methyl-2-oxobutanoate: step 3/4. Functionally, catalyzes the oxidation of 3-carboxy-2-hydroxy-4-methylpentanoate (3-isopropylmalate) to 3-carboxy-4-methyl-2-oxopentanoate. The product decarboxylates to 4-methyl-2 oxopentanoate. In Corynebacterium glutamicum (strain R), this protein is 3-isopropylmalate dehydrogenase.